The primary structure comprises 422 residues: MRVLVRDLKAHVGQEVELLGFLHWRRDLGRIQFLLLRDRSGVVQVVTGGLKLPLPESALRVRGLVVENAKAPGGLEVQAKEVEVLSPALEPTPVEIPKEEWRANPDTLLEYRYVTLRGEKARAPLKVQAALVRGFRRYLDRQDFTEIFTPKVVRAGAEGGSGLFGVDYFEKRAYLAQSPQLYKQIMVGVFERVYEVAPVWRMEEHHTSRHLNEYLSLDVEMGFIADEEDLMRLEEALLAEMLEEALNTAGDEIRLLGATWPSFPQDIPRLTHAEAKRILKEELGYPVGQDLSEEAERLLGEYAKERWGSDWLFVTRYPRSVRPFYTYPEEDGTTRSFDLLFRGLEITSGGQRIHRYEELLESLKAKGMDPEAFHGYLEVFKYGMPPHGGFAIGAERLTQKLLGLPNVRYARAFPRDRHRLTP.

Glu158 lines the L-aspartate pocket. Residues 180-183 (QLYK) form an aspartate region. Residue Arg201 coordinates L-aspartate. Residues 201 to 203 (RME), 209 to 211 (RHL), and Glu345 each bind ATP. L-aspartate-binding residues include Ser348 and Arg352. Position 393–396 (393–396 (GAER)) interacts with ATP.

This sequence belongs to the class-II aminoacyl-tRNA synthetase family. Type 2 subfamily. As to quaternary structure, homodimer. Makes part of a ribonucleoprotein particle (RNP) called transamidosome that allows channelling of the aa-tRNA from non-discriminating aspartyl-tRNA synthetase active site to the GatCAB amidotransferase site. The transamidosome complex is formed by two GatCABs, one dimeric ND-AspRSs and two tRNAs(Asn) molecules.

The protein localises to the cytoplasm. It carries out the reaction tRNA(Asx) + L-aspartate + ATP = L-aspartyl-tRNA(Asx) + AMP + diphosphate. In terms of biological role, aspartyl-tRNA synthetase with relaxed tRNA specificity since it is able to aspartylate not only its cognate tRNA(Asp) but also tRNA(Asn) with similar efficiencies. Reaction proceeds in two steps: L-aspartate is first activated by ATP to form Asp-AMP and then transferred to the acceptor end of tRNA(Asp/Asn). This chain is Aspartate--tRNA(Asp/Asn) ligase (aspS2), found in Thermus thermophilus (strain ATCC 27634 / DSM 579 / HB8).